The following is a 311-amino-acid chain: Porphobilinogen deaminase (311 aa).

Cys243 is subject to S-(dipyrrolylmethanemethyl)cysteine.

It belongs to the HMBS family. Monomer. Dipyrromethane serves as cofactor.

The catalysed reaction is 4 porphobilinogen + H2O = hydroxymethylbilane + 4 NH4(+). The protein operates within porphyrin-containing compound metabolism; protoporphyrin-IX biosynthesis; coproporphyrinogen-III from 5-aminolevulinate: step 2/4. Tetrapolymerization of the monopyrrole PBG into the hydroxymethylbilane pre-uroporphyrinogen in several discrete steps. This Blochmanniella floridana protein is Porphobilinogen deaminase.